A 189-amino-acid polypeptide reads, in one-letter code: Peptidyl-tRNA hydrolase (189 aa).

Tyr14 is a binding site for tRNA. The active-site Proton acceptor is His19. TRNA contacts are provided by Tyr64, Asn66, and Asn112.

Belongs to the PTH family. In terms of assembly, monomer.

The protein resides in the cytoplasm. The enzyme catalyses an N-acyl-L-alpha-aminoacyl-tRNA + H2O = an N-acyl-L-amino acid + a tRNA + H(+). Hydrolyzes ribosome-free peptidyl-tRNAs (with 1 or more amino acids incorporated), which drop off the ribosome during protein synthesis, or as a result of ribosome stalling. In terms of biological role, catalyzes the release of premature peptidyl moieties from peptidyl-tRNA molecules trapped in stalled 50S ribosomal subunits, and thus maintains levels of free tRNAs and 50S ribosomes. This chain is Peptidyl-tRNA hydrolase, found in Brevibacillus brevis (strain 47 / JCM 6285 / NBRC 100599).